We begin with the raw amino-acid sequence, 772 residues long: TBC domain-containing protein C4G8.04 (772 aa).

Residues 143–161 (SFFPSSQEPSIPENPSSLT) are compositionally biased toward polar residues. Disordered regions lie at residues 143-163 (SFFP…LTGE) and 275-294 (KFFR…TFVS). Low complexity predominate over residues 275-291 (KFFRSSPRCSTPSVSST). Residue Thr395 is modified to Phosphothreonine. The region spanning 504 to 693 (GVPLCYKAKV…RIFDMLFCDG (190 aa)) is the Rab-GAP TBC domain.

The polypeptide is TBC domain-containing protein C4G8.04 (Schizosaccharomyces pombe (strain 972 / ATCC 24843) (Fission yeast)).